The following is a 191-amino-acid chain: Ribonuclease HII (191 aa).

The 176-residue stretch at 16–191 folds into the RNase H type-2 domain; sequence INLIGIDEAG…KLHRKSFKLL (176 aa). The a divalent metal cation site is built by D22, E23, and D110.

It belongs to the RNase HII family. Mn(2+) is required as a cofactor. The cofactor is Mg(2+).

It localises to the cytoplasm. The catalysed reaction is Endonucleolytic cleavage to 5'-phosphomonoester.. Functionally, endonuclease that specifically degrades the RNA of RNA-DNA hybrids. In Campylobacter jejuni subsp. jejuni serotype O:2 (strain ATCC 700819 / NCTC 11168), this protein is Ribonuclease HII (rnhB).